The primary structure comprises 162 residues: Endoribonuclease YbeY (162 aa).

Positions 127, 131, and 137 each coordinate Zn(2+).

Belongs to the endoribonuclease YbeY family. Zn(2+) is required as a cofactor.

Its subcellular location is the cytoplasm. Its function is as follows. Single strand-specific metallo-endoribonuclease involved in late-stage 70S ribosome quality control and in maturation of the 3' terminus of the 16S rRNA. The polypeptide is Endoribonuclease YbeY (Acetivibrio thermocellus (strain ATCC 27405 / DSM 1237 / JCM 9322 / NBRC 103400 / NCIMB 10682 / NRRL B-4536 / VPI 7372) (Clostridium thermocellum)).